The primary structure comprises 365 residues: Succinyl-diaminopimelate desuccinylase (365 aa).

Histidine 65 serves as a coordination point for Zn(2+). The active site involves aspartate 67. Zn(2+) is bound at residue aspartate 96. Glutamate 126 acts as the Proton acceptor in catalysis. Residues glutamate 127, glutamate 155, and histidine 340 each contribute to the Zn(2+) site.

This sequence belongs to the peptidase M20A family. DapE subfamily. Homodimer. Zn(2+) is required as a cofactor. The cofactor is Co(2+).

It carries out the reaction N-succinyl-(2S,6S)-2,6-diaminopimelate + H2O = (2S,6S)-2,6-diaminopimelate + succinate. The protein operates within amino-acid biosynthesis; L-lysine biosynthesis via DAP pathway; LL-2,6-diaminopimelate from (S)-tetrahydrodipicolinate (succinylase route): step 3/3. Functionally, catalyzes the hydrolysis of N-succinyl-L,L-diaminopimelic acid (SDAP), forming succinate and LL-2,6-diaminopimelate (DAP), an intermediate involved in the bacterial biosynthesis of lysine and meso-diaminopimelic acid, an essential component of bacterial cell walls. This chain is Succinyl-diaminopimelate desuccinylase, found in Campylobacter jejuni subsp. doylei (strain ATCC BAA-1458 / RM4099 / 269.97).